A 263-amino-acid polypeptide reads, in one-letter code: S-methyl-5'-thioadenosine phosphorylase (263 aa).

Residues T13, 55-56 (RH), and 88-89 (SA) each bind phosphate. M186 contacts substrate. Position 187 (T187) interacts with phosphate. Residue 210 to 212 (DYD) coordinates substrate.

It belongs to the PNP/MTAP phosphorylase family. MTAP subfamily. As to quaternary structure, homohexamer. Dimer of a homotrimer.

It catalyses the reaction S-methyl-5'-thioadenosine + phosphate = 5-(methylsulfanyl)-alpha-D-ribose 1-phosphate + adenine. It functions in the pathway amino-acid biosynthesis; L-methionine biosynthesis via salvage pathway; S-methyl-5-thio-alpha-D-ribose 1-phosphate from S-methyl-5'-thioadenosine (phosphorylase route): step 1/1. In terms of biological role, catalyzes the reversible phosphorylation of S-methyl-5'-thioadenosine (MTA) to adenine and 5-methylthioribose-1-phosphate. Involved in the breakdown of MTA, a major by-product of polyamine biosynthesis. Responsible for the first step in the methionine salvage pathway after MTA has been generated from S-adenosylmethionine. Has broad substrate specificity with 6-aminopurine nucleosides as preferred substrates. The polypeptide is S-methyl-5'-thioadenosine phosphorylase (Nitrosopumilus maritimus (strain SCM1)).